The following is a 497-amino-acid chain: 4,4'-diaponeurosporene oxygenase (497 aa).

7–19 (VIGGGLGGISAAI) is a binding site for FAD.

It belongs to the carotenoid/retinoid oxidoreductase family. CrtP subfamily. It depends on FAD as a cofactor.

It carries out the reaction all-trans-4,4'-diaponeurosporene + 2 AH2 + 2 O2 = 4,4'-diaponeurosporenal + 2 A + 3 H2O. It functions in the pathway carotenoid biosynthesis; staphyloxanthin biosynthesis; staphyloxanthin from farnesyl diphosphate: step 3/5. In terms of biological role, involved in the biosynthesis of the yellow-orange carotenoid staphyloxanthin, which plays a role in the virulence via its protective function against oxidative stress. Catalyzes the oxidation of the terminal methyl side group of 4,4'-diaponeurosporene to form 4,4'-diaponeurosporen-4-al. The polypeptide is 4,4'-diaponeurosporene oxygenase (Staphylococcus aureus (strain MW2)).